Consider the following 535-residue polypeptide: Light-independent protochlorophyllide reductase subunit B (535 aa).

Asp36 lines the [4Fe-4S] cluster pocket. Asp292 serves as the catalytic Proton donor. 428–429 contacts substrate; it reads GL.

This sequence belongs to the ChlB/BchB/BchZ family. As to quaternary structure, protochlorophyllide reductase is composed of three subunits; BchL, BchN and BchB. Forms a heterotetramer of two BchB and two BchN subunits. [4Fe-4S] cluster is required as a cofactor.

The enzyme catalyses chlorophyllide a + oxidized 2[4Fe-4S]-[ferredoxin] + 2 ADP + 2 phosphate = protochlorophyllide a + reduced 2[4Fe-4S]-[ferredoxin] + 2 ATP + 2 H2O. It functions in the pathway porphyrin-containing compound metabolism; bacteriochlorophyll biosynthesis (light-independent). Its function is as follows. Component of the dark-operative protochlorophyllide reductase (DPOR) that uses Mg-ATP and reduced ferredoxin to reduce ring D of protochlorophyllide (Pchlide) to form chlorophyllide a (Chlide). This reaction is light-independent. The NB-protein (BchN-BchB) is the catalytic component of the complex. The protein is Light-independent protochlorophyllide reductase subunit B of Chlorobaculum parvum (strain DSM 263 / NCIMB 8327) (Chlorobium vibrioforme subsp. thiosulfatophilum).